The chain runs to 72 residues: U-actitoxin-Aeq5b (72 aa).

Residues 1–20 (MNQVMTIFLVLGVIVYSVES) form the signal peptide. 4 disulfide bridges follow: Cys33–Cys71, Cys37–Cys66, Cys44–Cys59, and Cys50–Cys56.

Belongs to the Acrorhagin I family. As to expression, expressed by acrorhagi.

It is found in the secreted. The protein resides in the nematocyst. Functionally, toxin that is lethal to crab. It interacts with divalent metal ions (zinc and nickel) suggesting it may function as a metal ion chelator to regulate metal ion levels or as a metal ion transporter, or that its function is modulated by metal ions. Is not active against any of the voltage-gated potassium and sodium channels tested. In addition, it does not show activity in bacterial and fungal growth inhibitory assays as well as in hemolytic assays. The chain is U-actitoxin-Aeq5b from Actinia equina (Beadlet anemone).